Reading from the N-terminus, the 649-residue chain is Acid beta-fructofuranosidase (649 aa).

Over 1–22 (MEHHKPLLPTSSHAAPTSSTRK) the chain is Cytoplasmic. The propeptide at 1 to 101 (MEHHKPLLPT…NLLFAGEGGA (101 aa)) is removed in mature form. A helical; Signal-anchor for type II membrane protein transmembrane segment spans residues 23 to 43 (DLLFVLCGLLFLSSLVAYGGY). The Lumenal portion of the chain corresponds to 44 to 649 (RASGVPHAHL…PFPFNPDQKS (606 aa)). Residues 52–75 (HLSSPTSNHQQDHQSPTSLPSSKW) are disordered. A compositionally biased stretch (polar residues) spans 54–72 (SSPTSNHQQDHQSPTSLPS). Residues 127–130 (WMND), Q146, W154, and 189–190 (WT) each bind substrate. D130 is an active-site residue. A glycan (N-linked (GlcNAc...) (complex) asparagine) is linked at N210. 253–254 (RD) is a binding site for substrate. The N-linked (GlcNAc...) (complex) asparagine glycan is linked to N275. 2 residues coordinate substrate: E308 and D341. A disulfide bridge links C498 with C546. The N-linked (GlcNAc...) (high mannose) asparagine glycan is linked to N618.

This sequence belongs to the glycosyl hydrolase 32 family. As to quaternary structure, present in two forms, a 70 kDa monomer and a heterodimer of the 30 kDa and 38 kDa subunits. The ratio of the levels of the two forms within cells appears to be regulated developmentally.

It localises to the membrane. Its subcellular location is the vacuole lumen. The catalysed reaction is Hydrolysis of terminal non-reducing beta-D-fructofuranoside residues in beta-D-fructofuranosides.. The protein operates within glycan biosynthesis; sucrose metabolism. Its function is as follows. Possible role in the continued mobilization of sucrose to sink organs. The polypeptide is Acid beta-fructofuranosidase (INVA) (Vigna radiata var. radiata (Mung bean)).